A 235-amino-acid polypeptide reads, in one-letter code: Probable RNA 2'-phosphotransferase (235 aa).

This sequence belongs to the KptA/TPT1 family.

Removes the 2'-phosphate from RNA via an intermediate in which the phosphate is ADP-ribosylated by NAD followed by a presumed transesterification to release the RNA and generate ADP-ribose 1''-2''-cyclic phosphate (APPR&gt;P). May function as an ADP-ribosylase. This is Probable RNA 2'-phosphotransferase from Thermoplasma volcanium (strain ATCC 51530 / DSM 4299 / JCM 9571 / NBRC 15438 / GSS1).